Here is a 757-residue protein sequence, read N- to C-terminus: DNA endonuclease RBBP8 (757 aa).

The essential for binding to the MRN complex and for RPA focus formation on DNA damage stretch occupies residues 22–45 (DLWTKLKEYHDKETQGLQVKVTKL). Positions 35–84 (TQGLQVKVTKLKKERILDAQRLEEFFTKNQQLREQQKVLHETIKVLEDRL) form a coiled coil. A required for interaction with LMO4, probably by stabilizing the interaction through RPPB8 dimerization region spans residues 45–160 (LKKERILDAQ…TDLESEEDVI (116 aa)). Residues K62 and K115 each participate in a glycyl lysine isopeptide (Lys-Gly) (interchain with G-Cter in SUMO2) cross-link. The stretch at 117-138 (ITELMNEKNTLQEENKKLSEQL) forms a coiled coil. K193 participates in a covalent cross-link: Glycyl lysine isopeptide (Lys-Gly) (interchain with G-Cter in SUMO2). S272 bears the Phosphoserine mark. The residue at position 309 (T309) is a Phosphothreonine. S320, S321, and S343 each carry phosphoserine. Residues 348–375 (GKKTHLKTVPLSNTSAPGPEKPRSKSED) form a disordered region. Glycyl lysine isopeptide (Lys-Gly) (interchain with G-Cter in SUMO2) cross-links involve residues K354 and K372. S373 bears the Phosphoserine mark. Residues K390, K399, and K405 each participate in a glycyl lysine isopeptide (Lys-Gly) (interchain with G-Cter in SUMO2) cross-link. Positions 407-417 (TSEPISEQGNI) are enriched in polar residues. A disordered region spans residues 407 to 430 (TSEPISEQGNIGHSKDTDRDKHVV). Basic and acidic residues predominate over residues 419-429 (HSKDTDRDKHV). Glycyl lysine isopeptide (Lys-Gly) (interchain with G-Cter in SUMO2) cross-links involve residues K433 and K443. The segment at 484–488 (PLDLS) is PXDLS motif. A PXDLS motif motif is present at residues 484-488 (PLDLS). The segment at 503-551 (CENSKIRFRQVTLYEALKPIPRDSSSSRKALSGSCGLTKDSPEEPCLQE) is damage-recruitment motif. K520 is covalently cross-linked (Glycyl lysine isopeptide (Lys-Gly) (interchain with G-Cter in SUMO2); alternate). The interval 524–544 (RDSSSSRKALSGSCGLTKDSP) is disordered. Residues K564 and K570 each participate in a glycyl lysine isopeptide (Lys-Gly) (interchain with G-Cter in SUMO2) cross-link. Residue K596 forms a Glycyl lysine isopeptide (Lys-Gly) (interchain with G-Cter in SUMO2); alternate linkage. Residues K605, K630, and K632 each participate in a glycyl lysine isopeptide (Lys-Gly) (interchain with G-Cter in SUMO2) cross-link. Residues 633-677 (SLQNNQDVSFENIQWSIDPGADLSQYKMGVTVDDTKDGSQSRLAG) are required for interaction with LMO4, probably by making physical contact with LMO4. The residue at position 656 (S656) is a Phosphoserine; by ATM. K668 is covalently cross-linked (Glycyl lysine isopeptide (Lys-Gly) (interchain with G-Cter in SUMO2)). Phosphoserine is present on S671. Positions 696 to 728 (KKQEQKGEESPNGERKMNDSLEDMFDRTTHEEY) are enriched in basic and acidic residues. The disordered stretch occupies residues 696 to 757 (KKQEQKGEES…TTTKKPNISW (62 aa)). A Glycyl lysine isopeptide (Lys-Gly) (interchain with G-Cter in SUMO2) cross-link involves residue K711. S715 bears the Phosphoserine mark. Over residues 747–757 (STTTKKPNISW) the composition is skewed to polar residues.

This sequence belongs to the COM1/SAE2/CtIP family. As to quaternary structure, homotetramer; formed by antiparallel association of helical extensions protruding from the N-termini of two parallel coiled-coil dimers. Forms a dumbbell-shaped particle in which polar globular domains are held about 30 nm apart by a central rod. Homotetramerization is required for DNA-end resection and repair. Interacts (via the PXDLS motif) with CTBP1; the interaction is disrupted via binding of the adenovirus E1A to CTBP1. Component of the BRCA1-RBBP8 complex. Interacts (the Ser-321 phosphorylated form) with BRCA1 (via the C-terminal BRCT domains): the interaction occurs in the G2 phase, ubiquitinates RBBP8 and involves RBBP8 in BRCA1-dependent G2/M checkpoint control on DNA damage. Interacts with RB1. Interacts with the MRN complex. Interacts directly with MRE11; the interaction is required for efficient homologous recombination (HR) and regulation of the MRN complex. Interacts directly with RAD50. Interacts (when phosphorylated by CDK1) with NBN; promoting association with the MRN complex. Interacts with LMO4 (via the LIM zinc-binding 1 domain). Interacts with SIAH1. Interacts with RNF138. Interacts with EXD2. Interacts with CUL3 and KLHL15; this interaction leads to RBBP8 proteasomal degradation. Directly interacts with PIN1; this interaction depends upon RBBP8 phosphorylation, predominantly at Thr-309. Interacts with FZR1; this interaction leads to APC/C-mediated RBBP8 proteasomal degradation. Interacts with AUNIP; leading to recruit RBBP8 to sites of DNA damage. Interacts with SAMHD1. Interacts with HDGFL2. Post-translationally, hyperphosphorylation upon ionizing radiation results in dissociation from BRCA1. Phosphorylation by CDK1 is essential for the recruitment to DNA and the DNA repair function. Phosphorylated on Ser-321 as cells enter G2 phase. This phosphorylation is required for binding BRCA1 and for the G2/M DNA damage transition checkpoint control. Phosphorylation at Thr-309, probably catalyzed by CDK2, is required for PIN1-binding, while phosphorylation at Ser-272 serves as a PIN1 isomerization site. Phosphorylation at Thr-309 is cell-cycle dependent. It steadily increases during S phase, peaks at late S/G2 phase, and drops at G1. Phosphorylation is not required for tetramerization. Binds to DNA more strongly when dephosphorylated. In terms of processing, ubiquitinated. Ubiquitination at multiple sites by BRCA1 (via its N-terminal RING domain) does not lead to its proteasomal degradation but instead the ubiquitinated RBBP8 binds to chromatin following DNA damage and may play a role in G2/M checkpoint control. Ubiquitinated by RNF138 at its N-terminus. Ubiquitinated through 'Lys-48' by the E3 CUL3-KLHL15 complex; this modification leads to proteasomal degradation. Ubiquitinated by the E3 FZR1/APC/C complex; this modification leads to proteasomal degradation.

Its subcellular location is the nucleus. It localises to the chromosome. Its function is as follows. Endonuclease that cooperates with the MRE11-RAD50-NBN (MRN) complex in DNA-end resection, the first step of double-strand break (DSB) repair through the homologous recombination (HR) pathway. HR is restricted to S and G2 phases of the cell cycle and preferentially repairs DSBs resulting from replication fork collapse. Key determinant of DSB repair pathway choice, as it commits cells to HR by preventing classical non-homologous end-joining (NHEJ). Specifically promotes the endonuclease activity of the MRN complex to clear DNA ends containing protein adducts: recruited to DSBs by NBN following phosphorylation by CDK1, and promotes the endonuclease activity of MRE11 to clear protein-DNA adducts and generate clean double-strand break ends. Functions downstream of the MRN complex and ATM, promotes ATR activation and its recruitment to DSBs in the S/G2 phase facilitating the generation of ssDNA. Component of the BRCA1-RBBP8 complex that regulates CHEK1 activation and controls cell cycle G2/M checkpoints on DNA damage. During immunoglobulin heavy chain class-switch recombination, promotes microhomology-mediated alternative end joining (A-NHEJ) and plays an essential role in chromosomal translocations. Binds preferentially to DNA Y-junctions and to DNA substrates with blocked ends and promotes intermolecular DNA bridging. The polypeptide is DNA endonuclease RBBP8 (RBBP8) (Bos taurus (Bovine)).